Consider the following 481-residue polypeptide: Keratin, type I cytoskeletal 39 (481 aa).

Residues 1-25 are disordered; it reads MDTKGSTVTISSSTPPQNCSGNTNV. The segment at 1 to 90 is head; that stretch reads MDTKGSTVTI…RCSDGINSHE (90 aa). The IF rod domain occupies 90 to 401; that stretch reads EKETMQILNE…SLLESLDGRL (312 aa). The coil 1A stretch occupies residues 91-125; the sequence is KETMQILNERLASYLEKVRMLEGENADLEDKIQEE. The segment at 126–136 is linker 1; sequence CSKTLPILCPD. Positions 137 to 237 are coil 1B; that stretch reads YLSYYTTIEQ…HEEEINSLQC (101 aa). A linker 12 region spans residues 238–253; it reads QLGDRINIEVTAAPSV. The tract at residues 254–397 is coil 2; the sequence is DLNQILQKMR…ATYRSLLESL (144 aa). Residues 398 to 481 form a tail region; sequence DGRLPCNPCT…PCYITRPAKV (84 aa).

The protein belongs to the intermediate filament family. As to quaternary structure, heterotetramer of two type I and two type II keratins.

May play a role in late hair differentiation. This is Keratin, type I cytoskeletal 39 (Krt39) from Rattus norvegicus (Rat).